The following is a 1480-amino-acid chain: MQRSPLEKASVVSKLFFSWTRPILKKGYRQRLELSDIYQIPSADSADNLSEKLEREWDRELASKKNPKLINALRRCFFWRFMFYGILLYLGEVTKAVQPLLLGRIIASYDPDNKTERSIAIYLGIGLCLLFIVRTLLLHPAIFGLHHIGMQMRIAMFSLIYKKTLKLSSRVLDKISIGQLVSLLSNNLNKFDEGLALAHFVWIAPLQVALLMGLIWELLQASVFCGLGFLIVLALFQAGLGRMMMKYRDQRAGKINERLVITSEMIENIQSVKAYCWEEAMEKMIENLRQTELKLTRKAAYVRYFNSSAFFFSGFFVVFLSVLPYALIKGIILRKIFTTISFCIVLRMAVTRQFPWAVQTWYDSLGAINKIQDFLQKQEYKTLEYNLTTTEVVMENVTAFWEEGFGELFEKAKQSNNNRKTSNGHDNLFFSNFSLLGTPVLKDINFKIERGQLLAVAGSTGAGKTSLLMMIMGELEPSEGKIKHSGRISFCSQFSWIMPGTIKENIIFGVSYDEYRYRSVIKACQLEEDISKFAEKDNIVLGEGGITLSGGQRARISLARAVYKDADLYLLDSPFGYLDVLTEKEIFESCVCKLMANKTRILVTSKMEHLKKADKILILHEGSSYFYGTFSELQNLRPDFSSKLMGYDSFDQFSSERRNSILTETLRRFSLEGDAPVSWTETKKQSFKQTGEFGEKRKNSILNSINSIRKFSIVHKTPLQMNGIEEDSDEPSERRLSLIPDSEQGEAILPRISVINTGPALQVRRRQSVLNMMTHSVNQGQSVHRKTTASTRKVSLAPQANLTELDIYSRRLSQETGLEISEEINEEDLKECFFDDMESIPAVTTWNTYLRYITLHKSLIFVLIWCLVIFLAEVAASLVVLWLLGNTSFQDKGNSTYSRNNSYAVIITNTSSYYVFYIYVGVADTLLALGFFRGLPLVHTLITVSKILHHKMLHSVLQAPMSTLNTLKAGGILNRFSKDIAILDDLLPLTIFDFIQLLLIVIGAIAVVSVLQPYIFLATVPVIAAFILLRAYFLQTSQQLKQLESAGRSPIFTHLVTSLKGLWTLRAFGRQPYFETLFHKALNLHTANWFLYLSTLRWFQMRIEMIFVIFFIAVTFISILTTGEGEGTVGIILTLAMNIMSTLQWAVNSSIDVDSLMRSVSRVFKFIDMPTEGKPTKSTKAYKNGQLSKVMIIENSHVKKDDIWPSGGQMTIKDLTAKYIEGGNAILENISFSISPGQRVGLLGRTGSGKSTLLSAFLRLLNTEGEIQIDGVSWDSVTLQQWRKAFGVIPQKVFIFTGTFRKNLDPYEQWSDQEVWKVADEVGLRSVIEQFPGKLDFVLVDGGCVLSHGHKQLMCLARSVLSKAKILLLDEPSAHLDPVTYQIIRRALKQAFADCTVILCEHRIEAMLECQQFLVIEENKVRQYDSIQKLLNEKSLFQQAISHSDRVKLFPHRNSSKYKSRPQIASLKEETEEEVQETRL.

The Cytoplasmic segment spans residues 1–77; sequence MQRSPLEKAS…KLINALRRCF (77 aa). A helical membrane pass occupies residues 78–98; the sequence is FWRFMFYGILLYLGEVTKAVQ. An ABC transmembrane type-1 1 domain is found at 81 to 365; it reads FMFYGILLYL…WAVQTWYDSL (285 aa). At 99–122 the chain is on the extracellular side; it reads PLLLGRIIASYDPDNKTERSIAIY. A helical transmembrane segment spans residues 123–146; that stretch reads LGIGLCLLFIVRTLLLHPAIFGLH. Over 147–195 the chain is Cytoplasmic; that stretch reads HIGMQMRIAMFSLIYKKTLKLSSRVLDKISIGQLVSLLSNNLNKFDEGL. Residues 196-216 traverse the membrane as a helical segment; that stretch reads ALAHFVWIAPLQVALLMGLIW. Over 217 to 222 the chain is Extracellular; sequence ELLQAS. Residues 223-243 form a helical membrane-spanning segment; the sequence is VFCGLGFLIVLALFQAGLGRM. Residues 244–298 are Cytoplasmic-facing; that stretch reads MMKYRDQRAGKINERLVITSEMIENIQSVKAYCWEEAMEKMIENLRQTELKLTRK. The chain crosses the membrane as a helical span at residues 299-319; that stretch reads AAYVRYFNSSAFFFSGFFVVF. The Extracellular portion of the chain corresponds to 320–339; it reads LSVLPYALIKGIILRKIFTT. A helical transmembrane segment spans residues 340–358; the sequence is ISFCIVLRMAVTRQFPWAV. Over 359 to 858 the chain is Cytoplasmic; the sequence is QTWYDSLGAI…YLRYITLHKS (500 aa). ATP-binding positions include Trp401, Ser434, 458–465, and Gln493; that span reads GSTGAGKT. In terms of domain architecture, ABC transporter 1 spans 423–646; it reads NGHDNLFFSN…RPDFSSKLMG (224 aa). Cys524 is lipidated: S-palmitoyl cysteine. 2 positions are modified to phosphoserine: Ser549 and Ser660. The tract at residues 654-831 is disordered R region; the sequence is SSERRNSILT…EEINEEDLKE (178 aa). Phosphoserine; by PKA is present on Ser670. Ser686 bears the Phosphoserine mark. Residue Lys688 forms a Glycyl lysine isopeptide (Lys-Gly) (interchain with G-Cter in ubiquitin) linkage. Ser700 and Ser712 each carry phosphoserine. Thr717 carries the post-translational modification Phosphothreonine. 6 positions are modified to phosphoserine: Ser737, Ser753, Ser768, Ser790, Ser795, and Ser813. Residues 859–879 traverse the membrane as a helical segment; sequence LIFVLIWCLVIFLAEVAASLV. Residues 859-1155 form the ABC transmembrane type-1 2 domain; it reads LIFVLIWCLV…AVNSSIDVDS (297 aa). Residues 880-918 are Extracellular-facing; that stretch reads VLWLLGNTSFQDKGNSTYSRNNSYAVIITNTSSYYVFYI. Asn894, Asn900, and Asn909 each carry an N-linked (GlcNAc...) asparagine glycan. Residues 919 to 939 traverse the membrane as a discontinuously helical segment; it reads YVGVADTLLALGFFRGLPLVH. At 940–990 the chain is on the cytoplasmic side; the sequence is TLITVSKILHHKMLHSVLQAPMSTLNTLKAGGILNRFSKDIAILDDLLPLT. The helical transmembrane segment at 991-1011 threads the bilayer; that stretch reads IFDFIQLLLIVIGAIAVVSVL. The Extracellular portion of the chain corresponds to 1012 to 1013; the sequence is QP. The helical transmembrane segment at 1014–1034 threads the bilayer; sequence YIFLATVPVIAAFILLRAYFL. Topologically, residues 1035-1095 are cytoplasmic; it reads QTSQQLKQLE…TANWFLYLST (61 aa). The helical transmembrane segment at 1096–1116 threads the bilayer; that stretch reads LRWFQMRIEMIFVIFFIAVTF. The Extracellular portion of the chain corresponds to 1117-1130; sequence ISILTTGEGEGTVG. A helical membrane pass occupies residues 1131–1151; the sequence is IILTLAMNIMSTLQWAVNSSI. Residues 1152–1480 are Cytoplasmic-facing; it reads DVDSLMRSVS…TEEEVQETRL (329 aa). Residues 1210–1443 enclose the ABC transporter 2 domain; that stretch reads MTIKDLTAKY…KSLFQQAISH (234 aa). Residues Tyr1219 and 1244–1251 each bind ATP; that span reads GRTGSGKS. Residues 1386 to 1480 form an interaction with GORASP2 region; it reads RALKQAFADC…TEEEVQETRL (95 aa). Residue Cys1395 is the site of S-palmitoyl cysteine attachment. A phosphoserine mark is found at Ser1444 and Ser1456. The segment at 1452 to 1480 is disordered; the sequence is HRNSSKYKSRPQIASLKEETEEEVQETRL. The segment covering 1470–1480 has biased composition (acidic residues); that stretch reads ETEEEVQETRL. A PDZ-binding motif is present at residues 1478 to 1480; sequence TRL.

Belongs to the ABC transporter superfamily. ABCC family. CFTR transporter (TC 3.A.1.202) subfamily. As to quaternary structure, monomer; does not require oligomerization for channel activity. May form oligomers in the membrane. Interacts with SLC26A3, SLC26A6 and NHERF1. Interacts with SHANK2. Interacts with MYO6. Interacts (via C-terminus) with GOPC (via PDZ domain); this promotes CFTR internalization and thereby decreases channel activity. Interacts with SLC4A7 through NHERF1. Found in a complex with MYO5B and RAB11A. Interacts with ANO1. Interacts with SLC26A8. Interacts with AHCYL1; the interaction increases CFTR activity. Interacts with CSE1L. The core-glycosylated form interacts with GORASP2 (via PDZ GRASP-type 1 domain) in respone to ER stress. Interacts with MARCHF2; the interaction leads to CFTR ubiqtuitination and degradation. Interacts with ADGRG2. Post-translationally, N-glycosylated. In terms of processing, phosphorylated; cAMP treatment promotes phosphorylation and activates the channel. Dephosphorylation decreases the ATPase activity (in vitro). Phosphorylation at PKA sites activates the channel. Phosphorylation at PKC sites enhances the response to phosphorylation by PKA. Phosphorylated by AMPK; this inhibits channel activity. Ubiquitinated, leading to its degradation in the lysosome. Deubiquitination by USP10 in early endosomes enhances its endocytic recycling to the cell membrane. Ubiquitinated by RNF185 during ER stress. Ubiquitinated by MARCHF2.

It is found in the apical cell membrane. It localises to the early endosome membrane. Its subcellular location is the cell membrane. The protein resides in the recycling endosome membrane. The protein localises to the endoplasmic reticulum membrane. It is found in the nucleus. It catalyses the reaction ATP + H2O + closed Cl(-) channel = ADP + phosphate + open Cl(-) channel.. The enzyme catalyses chloride(in) = chloride(out). It carries out the reaction hydrogencarbonate(in) = hydrogencarbonate(out). The catalysed reaction is ATP + H2O = ADP + phosphate + H(+). Epithelial ion channel that plays an important role in the regulation of epithelial ion and water transport and fluid homeostasis. Mediates the transport of chloride ions across the cell membrane. Possesses an intrinsic ATPase activity and utilizes ATP to gate its channel; the passive flow of anions through the channel is gated by cycles of ATP binding and hydrolysis by the ATP-binding domains. The ion channel is also permeable to HCO(3)(-); selectivity depends on the extracellular chloride concentration. Exerts its function also by modulating the activity of other ion channels and transporters. Contributes to the regulation of the pH and the ion content of the epithelial fluid layer. Modulates the activity of the epithelial sodium channel (ENaC) complex, in part by regulating the cell surface expression of the ENaC complex. May regulate bicarbonate secretion and salvage in epithelial cells by regulating the transporter SLC4A7. Can inhibit the chloride channel activity of ANO1. Plays a role in the chloride and bicarbonate homeostasis during sperm epididymal maturation and capacitation. The chain is Cystic fibrosis transmembrane conductance regulator from Plecturocebus moloch (Dusky titi monkey).